The following is a 478-amino-acid chain: Putative L-amino-acid oxidase YobN (478 aa).

Residues Ser34, Glu53, Arg61, and 80 to 81 contribute to the FAD site; that span reads MR. Positions 81 and 369 each coordinate substrate. Residues Glu451 and 460–463 each bind FAD; that span reads MQGA.

Belongs to the flavin monoamine oxidase family. FIG1 subfamily. Requires FAD as cofactor.

It catalyses the reaction an L-alpha-amino acid + O2 + H2O = a 2-oxocarboxylate + H2O2 + NH4(+). This is Putative L-amino-acid oxidase YobN (yobN) from Bacillus subtilis (strain 168).